A 261-amino-acid chain; its full sequence is uncharacterized protein (261 aa).

This is an uncharacterized protein from Methanocaldococcus jannaschii (strain ATCC 43067 / DSM 2661 / JAL-1 / JCM 10045 / NBRC 100440) (Methanococcus jannaschii).